The sequence spans 218 residues: Phosphoglycolate phosphatase (218 aa).

Residue D7 is the Nucleophile of the active site. Mg(2+) contacts are provided by D7, D9, and D167.

It belongs to the HAD-like hydrolase superfamily. CbbY/CbbZ/Gph/YieH family. The cofactor is Mg(2+).

The catalysed reaction is 2-phosphoglycolate + H2O = glycolate + phosphate. Its pathway is organic acid metabolism; glycolate biosynthesis; glycolate from 2-phosphoglycolate: step 1/1. In terms of biological role, specifically catalyzes the dephosphorylation of 2-phosphoglycolate. Is involved in the dissimilation of the intracellular 2-phosphoglycolate formed during the DNA repair of 3'-phosphoglycolate ends, a major class of DNA lesions induced by oxidative stress. This Cereibacter sphaeroides (Rhodobacter sphaeroides) protein is Phosphoglycolate phosphatase.